The sequence spans 284 residues: MALIIDGRKVAAAIREEVKSEVDRLKERGIVPRLAVILVGEDPASVLYSRSIEKACTRAGVEYELFALPAGIPEDDVVALLSRLNEDGSVHGIMVELPLPKQMNRQKVLEAVSPVKDVDGVHPVNRGYIMSNSEGLFPTTPMSCIEIMLRNGIEIKGKHAVLVGRGESVGKPLVYMMLNQNATVTVCHTFTNDLAYHTRQADILVVAVGKAGMITGDMVKPGAVVVDAGINEAKDGGICGDVDFDSVARVAGAISPVPGGVGSLTTTLILKNTLKAIRLQGGKV.

NADP(+) is bound by residues 164–166 (GRG), Thr-189, and Ile-230.

Belongs to the tetrahydrofolate dehydrogenase/cyclohydrolase family. In terms of assembly, homodimer.

It carries out the reaction (6R)-5,10-methylene-5,6,7,8-tetrahydrofolate + NADP(+) = (6R)-5,10-methenyltetrahydrofolate + NADPH. The catalysed reaction is (6R)-5,10-methenyltetrahydrofolate + H2O = (6R)-10-formyltetrahydrofolate + H(+). It participates in one-carbon metabolism; tetrahydrofolate interconversion. Its function is as follows. Catalyzes the oxidation of 5,10-methylenetetrahydrofolate to 5,10-methenyltetrahydrofolate and then the hydrolysis of 5,10-methenyltetrahydrofolate to 10-formyltetrahydrofolate. The polypeptide is Bifunctional protein FolD (Pelotomaculum thermopropionicum (strain DSM 13744 / JCM 10971 / SI)).